We begin with the raw amino-acid sequence, 283 residues long: Protein/nucleic acid deglycase HchA (283 aa).

Histidine 86, glutamate 91, and histidine 123 together coordinate Zn(2+). The active-site Nucleophile is cysteine 185.

The protein belongs to the peptidase C56 family. HchA subfamily. As to quaternary structure, homodimer.

The protein localises to the cytoplasm. The catalysed reaction is N(omega)-(1-hydroxy-2-oxopropyl)-L-arginyl-[protein] + H2O = lactate + L-arginyl-[protein] + H(+). It catalyses the reaction N(6)-(1-hydroxy-2-oxopropyl)-L-lysyl-[protein] + H2O = lactate + L-lysyl-[protein] + H(+). It carries out the reaction S-(1-hydroxy-2-oxopropyl)-L-cysteinyl-[protein] + H2O = lactate + L-cysteinyl-[protein] + H(+). The enzyme catalyses N(omega)-(1-hydroxy-2-oxoethyl)-L-arginyl-[protein] + H2O = L-arginyl-[protein] + glycolate + H(+). The catalysed reaction is N(6)-(1-hydroxy-2-oxoethyl)-L-lysyl-[protein] + H2O = glycolate + L-lysyl-[protein] + H(+). It catalyses the reaction S-(1-hydroxy-2-oxoethyl)-L-cysteinyl-[protein] + H2O = glycolate + L-cysteinyl-[protein] + H(+). It carries out the reaction N(2)-(1-hydroxy-2-oxopropyl)-dGTP + H2O = lactate + dGTP + H(+). The enzyme catalyses N(2)-(1-hydroxy-2-oxopropyl)-GTP + H2O = lactate + GTP + H(+). The catalysed reaction is N(2)-(1-hydroxy-2-oxopropyl)-GDP + H2O = lactate + GDP + H(+). It catalyses the reaction N(2)-(1-hydroxy-2-oxopropyl)-GMP + H2O = lactate + GMP + H(+). It carries out the reaction N(2)-(1-hydroxy-2-oxoethyl)-dGTP + H2O = dGTP + glycolate + H(+). The enzyme catalyses N(2)-(1-hydroxy-2-oxoethyl)-GTP + H2O = glycolate + GTP + H(+). The catalysed reaction is N(2)-(1-hydroxy-2-oxoethyl)-GDP + H2O = glycolate + GDP + H(+). It catalyses the reaction N(2)-(1-hydroxy-2-oxoethyl)-GMP + H2O = glycolate + GMP + H(+). It carries out the reaction an N(2)-(1-hydroxy-2-oxopropyl)-guanosine in RNA + H2O = a guanosine in RNA + lactate + H(+). The enzyme catalyses an N(2)-(1-hydroxy-2-oxopropyl)-2'-deoxyguanosine in DNA + H2O = a 2'-deoxyguanosine in DNA + lactate + H(+). The catalysed reaction is an N(2)-(1-hydroxy-2-oxoethyl)-guanosine in RNA + H2O = a guanosine in RNA + glycolate + H(+). It catalyses the reaction an N(2)-(1-hydroxy-2-oxoethyl)-2'-deoxyguanosine in DNA + H2O = a 2'-deoxyguanosine in DNA + glycolate + H(+). Functionally, protein and nucleotide deglycase that catalyzes the deglycation of the Maillard adducts formed between amino groups of proteins or nucleotides and reactive carbonyl groups of glyoxals. Thus, functions as a protein deglycase that repairs methylglyoxal- and glyoxal-glycated proteins, and releases repaired proteins and lactate or glycolate, respectively. Deglycates cysteine, arginine and lysine residues in proteins, and thus reactivates these proteins by reversing glycation by glyoxals. Acts on early glycation intermediates (hemithioacetals and aminocarbinols), preventing the formation of Schiff bases and advanced glycation endproducts (AGE). Also functions as a nucleotide deglycase able to repair glycated guanine in the free nucleotide pool (GTP, GDP, GMP, dGTP) and in DNA and RNA. Is thus involved in a major nucleotide repair system named guanine glycation repair (GG repair), dedicated to reversing methylglyoxal and glyoxal damage via nucleotide sanitization and direct nucleic acid repair. Plays an important role in protecting cells from carbonyl stress. The sequence is that of Protein/nucleic acid deglycase HchA from Shigella flexneri.